The primary structure comprises 636 residues: Chaperone protein DnaK (636 aa).

Thr203 is subject to Phosphothreonine; by autocatalysis. A disordered region spans residues 602–636 (VYGKQQEGAPAQEEPSAEGKKADDEGTVEGEFREV). The span at 618–636 (AEGKKADDEGTVEGEFREV) shows a compositional bias: basic and acidic residues.

It belongs to the heat shock protein 70 family.

In terms of biological role, acts as a chaperone. The polypeptide is Chaperone protein DnaK (Dehalococcoides mccartyi (strain ATCC BAA-2100 / JCM 16839 / KCTC 5957 / BAV1)).